We begin with the raw amino-acid sequence, 418 residues long: MKAEIIAVGTEILTGQIVNTNAQFLSEKLAEIGVDVYFQTAVGDNEVRLLSLLEIASQRSSLVILTGGLGPTEDDLTKQTLAKFLGKALVFDPQAQEKLDIFFALRPDYARTPNNERQAQIVEGAIPLPNETGLAVGGKLEVDGVTYVVLPGPPSELKPMVLNQLLPKLMTGSKLYSRVLRFFGIGESQLVTILADLIDNQIDPTLAPYAKTGEVTLRLSTKASSQEEANQALDILENQILDCQTFEGISLRDFCYGYGEETSLASIVVEELKRQGKTIAAAESLTAGLFQATVTNFSEVSSIFKSGFVTYSLEEKSRMLDIPAKNLEEHGVVSEFTAQKMAEQARSKTQSDFGISLTGVAGPDSLEGHPVGTVFIGLAQEQGTEVIKVNIGGRSRADVRHIAVMHAFNLVRKALLSD.

It belongs to the CinA family.

The chain is Putative competence-damage inducible protein from Streptococcus pneumoniae (strain CGSP14).